Consider the following 419-residue polypeptide: L-rhamnose isomerase (419 aa).

Histidine 262, aspartate 294, and aspartate 296 together coordinate Mn(2+).

Belongs to the rhamnose isomerase family. As to quaternary structure, homotetramer. Requires Mn(2+) as cofactor.

It localises to the cytoplasm. The catalysed reaction is L-rhamnopyranose = L-rhamnulose. It participates in carbohydrate degradation; L-rhamnose degradation; glycerone phosphate from L-rhamnose: step 1/3. In terms of biological role, catalyzes the interconversion of L-rhamnose and L-rhamnulose. This is L-rhamnose isomerase from Escherichia coli (strain SMS-3-5 / SECEC).